The primary structure comprises 271 residues: Formamidopyrimidine-DNA glycosylase (271 aa).

Pro2 acts as the Schiff-base intermediate with DNA in catalysis. Residue Glu3 is the Proton donor of the active site. Lys57 serves as the catalytic Proton donor; for beta-elimination activity. Residues His90, Arg109, and Lys150 each coordinate DNA. Residues 235–269 form an FPG-type zinc finger; sequence LVYGNKDKPCPKCGGKIESLIIGQRNSFFCPKCQK. The active-site Proton donor; for delta-elimination activity is the Arg259.

This sequence belongs to the FPG family. Monomer. It depends on Zn(2+) as a cofactor.

The catalysed reaction is Hydrolysis of DNA containing ring-opened 7-methylguanine residues, releasing 2,6-diamino-4-hydroxy-5-(N-methyl)formamidopyrimidine.. The enzyme catalyses 2'-deoxyribonucleotide-(2'-deoxyribose 5'-phosphate)-2'-deoxyribonucleotide-DNA = a 3'-end 2'-deoxyribonucleotide-(2,3-dehydro-2,3-deoxyribose 5'-phosphate)-DNA + a 5'-end 5'-phospho-2'-deoxyribonucleoside-DNA + H(+). Involved in base excision repair of DNA damaged by oxidation or by mutagenic agents. Acts as a DNA glycosylase that recognizes and removes damaged bases. Has a preference for oxidized purines, such as 7,8-dihydro-8-oxoguanine (8-oxoG). Has AP (apurinic/apyrimidinic) lyase activity and introduces nicks in the DNA strand. Cleaves the DNA backbone by beta-delta elimination to generate a single-strand break at the site of the removed base with both 3'- and 5'-phosphates. The chain is Formamidopyrimidine-DNA glycosylase from Haemophilus influenzae (strain PittEE).